Reading from the N-terminus, the 1347-residue chain is Protein dispatched homolog 3 (1347 aa).

The Cytoplasmic segment spans residues 1–67 (MDSEDDPLLQ…LGWAFTNPCC (67 aa)). Residues 68–88 (AGLVLFLGCSIPMVLSAFMFL) traverse the membrane as a helical segment. Over 89 to 417 (YYPPLDIDIS…YEVRRTFNND (329 aa)) the chain is Lumenal. The disordered stretch occupies residues 156–207 (GNHSRPASRAPRSAPRDTVATQTSAANSSERRRREAPSPEGQVTNQSRARRG). Residue asparagine 157 is glycosylated (N-linked (GlcNAc...) asparagine). Low complexity predominate over residues 159–168 (SRPASRAPRS). Positions 412–570 (RTFNNDMLLA…LFTMPAALGL (159 aa)) constitute an SSD domain. A helical membrane pass occupies residues 418–438 (MLLAFISSSCIAALVYILTSC). Residue serine 439 is a topological domain, cytoplasmic. A helical transmembrane segment spans residues 440–460 (VFLSFFGIASIGLSCLVALFL). The Lumenal portion of the chain corresponds to 461 to 463 (YHV). Residues 464–484 (VFGIQYLGILNGVAAFVIVGI) traverse the membrane as a helical segment. The Cytoplasmic portion of the chain corresponds to 485–528 (GVDDVFVFINTYRQATHLEDPQLRMIHTIQTAGKATFFTSLTTA). A helical membrane pass occupies residues 529 to 549 (AAYAANVFSQIPAVHDFGLFM). Residue serine 550 is a topological domain, lumenal. Residues 551 to 571 (LIVTCCWLAVLFTMPAALGLW) traverse the membrane as a helical segment. Over 572–684 (SLYMAPLESS…WVLWAAVKSR (113 aa)) the chain is Cytoplasmic. The helical transmembrane segment at 685–705 (WVIVGLFASILILSLVFASRL) threads the bilayer. Topologically, residues 706–1137 (RPASRAPLLF…IFMEIIGVQS (432 aa)) are lumenal. Asparagine 976 is a glycosylation site (N-linked (GlcNAc...) asparagine). Residues 1138-1158 (ALYGLVLSLLICVAAVAVFTT) traverse the membrane as a helical segment. Histidine 1159 is a topological domain (cytoplasmic). The chain crosses the membrane as a helical span at residues 1160–1180 (VLLLLPVLLSILGIVCLVVTI). Topologically, residues 1181-1246 (MYWSGWEMGA…TLEAVRHVGV (66 aa)) are lumenal. A helical membrane pass occupies residues 1247–1267 (AIVSSALTTVIATVPLFFCII). At 1268–1281 (APFAKFGKIVALNT) the chain is on the cytoplasmic side. A helical membrane pass occupies residues 1282–1302 (GVSILYTLTVSTALLGIMAPG). At 1303 to 1310 (SFTRTRTS) the chain is on the lumenal side. The chain crosses the membrane as a helical span at residues 1311-1331 (FLKALGAVLLAGALGLGACLV). Residues 1332–1347 (LLRSGYKIPLPSGATL) are Cytoplasmic-facing.

The protein belongs to the patched family. Expressed in brain, retina, testis and thymus.

It localises to the endoplasmic reticulum membrane. The protein localises to the nucleus membrane. The protein resides in the cytoplasmic vesicle membrane. Its function is as follows. Plays a role in neuronal proliferation and differentiation. Plays a role in the accumulation of cellular cholesterol. Involved in intracellular lipid droplet formation. May contribute to cholesterol homeostasis in neuronal cells. The chain is Protein dispatched homolog 3 from Mus musculus (Mouse).